The chain runs to 577 residues: Arginine--tRNA ligase (577 aa).

Residues 122–132 carry the 'HIGH' region motif; the sequence is PNVAKEMHVGH.

This sequence belongs to the class-I aminoacyl-tRNA synthetase family. As to quaternary structure, monomer.

It is found in the cytoplasm. The catalysed reaction is tRNA(Arg) + L-arginine + ATP = L-arginyl-tRNA(Arg) + AMP + diphosphate. This is Arginine--tRNA ligase from Shigella flexneri serotype 5b (strain 8401).